We begin with the raw amino-acid sequence, 175 residues long: ATP-dependent protease subunit HslV (175 aa).

Thr-2 is an active-site residue. Gly-158, Cys-161, and Thr-164 together coordinate Na(+).

Belongs to the peptidase T1B family. HslV subfamily. A double ring-shaped homohexamer of HslV is capped on each side by a ring-shaped HslU homohexamer. The assembly of the HslU/HslV complex is dependent on binding of ATP.

The protein resides in the cytoplasm. The catalysed reaction is ATP-dependent cleavage of peptide bonds with broad specificity.. Its activity is regulated as follows. Allosterically activated by HslU binding. In terms of biological role, protease subunit of a proteasome-like degradation complex believed to be a general protein degrading machinery. This chain is ATP-dependent protease subunit HslV, found in Haemophilus influenzae (strain ATCC 51907 / DSM 11121 / KW20 / Rd).